Reading from the N-terminus, the 106-residue chain is Iron-sulfur cluster assembly protein CyaY (106 aa).

Belongs to the frataxin family.

Functionally, involved in iron-sulfur (Fe-S) cluster assembly. May act as a regulator of Fe-S biogenesis. This Pectobacterium atrosepticum (strain SCRI 1043 / ATCC BAA-672) (Erwinia carotovora subsp. atroseptica) protein is Iron-sulfur cluster assembly protein CyaY.